Here is a 272-residue protein sequence, read N- to C-terminus: 3-methyl-2-oxobutanoate hydroxymethyltransferase (272 aa).

Mg(2+) contacts are provided by aspartate 42 and aspartate 86. Residues 42–43, aspartate 86, and lysine 116 contribute to the 3-methyl-2-oxobutanoate site; that span reads DS. Glutamate 118 serves as a coordination point for Mg(2+). The active-site Proton acceptor is glutamate 185. Residues 251–272 form a disordered region; the sequence is LKEQRDQRATPTTPPPPPAPDC. Over residues 262 to 272 the composition is skewed to pro residues; it reads TTPPPPPAPDC.

The protein belongs to the PanB family. Homodecamer; pentamer of dimers. Requires Mg(2+) as cofactor.

It is found in the cytoplasm. The catalysed reaction is 3-methyl-2-oxobutanoate + (6R)-5,10-methylene-5,6,7,8-tetrahydrofolate + H2O = 2-dehydropantoate + (6S)-5,6,7,8-tetrahydrofolate. The protein operates within cofactor biosynthesis; (R)-pantothenate biosynthesis; (R)-pantoate from 3-methyl-2-oxobutanoate: step 1/2. Catalyzes the reversible reaction in which hydroxymethyl group from 5,10-methylenetetrahydrofolate is transferred onto alpha-ketoisovalerate to form ketopantoate. The polypeptide is 3-methyl-2-oxobutanoate hydroxymethyltransferase (Synechococcus sp. (strain CC9311)).